The primary structure comprises 128 residues: Fluoride-specific ion channel FluC (128 aa).

A run of 4 helical transmembrane segments spans residues 7–27 (AVLL…LIAV), 34–54 (TGFP…IGMI), 70–90 (LLLA…MYEI), and 104–124 (LYLI…MALA). 2 residues coordinate Na(+): glycine 78 and threonine 81.

The protein belongs to the fluoride channel Fluc/FEX (TC 1.A.43) family.

It is found in the cell inner membrane. The enzyme catalyses fluoride(in) = fluoride(out). With respect to regulation, na(+) is not transported, but it plays an essential structural role and its presence is essential for fluoride channel function. Its function is as follows. Fluoride-specific ion channel. Important for reducing fluoride concentration in the cell, thus reducing its toxicity. The protein is Fluoride-specific ion channel FluC of Prosthecochloris aestuarii (strain DSM 271 / SK 413).